The following is a 261-amino-acid chain: Aminoglycoside N(3)-acetyltransferase IV (261 aa).

Belongs to the antibiotic N-acetyltransferase family.

The enzyme catalyses a 2-deoxystreptamine antibiotic + acetyl-CoA = an N(3)-acetyl-2-deoxystreptamine antibiotic + CoA + H(+). Its function is as follows. Resistance to antibiotics containing the 2-deoxy-streptamine ring including gentamicin, kanamycin, tobramycin, neomycin and apramycin. The sequence is that of Aminoglycoside N(3)-acetyltransferase IV (aacC4) from Salmonella sp.